We begin with the raw amino-acid sequence, 108 residues long: Large ribosomal subunit protein bL31B (108 aa).

The disordered stretch occupies residues 88–108 (AAVEEAPAVKSKKKAPIKKKK). Over residues 97–108 (KSKKKAPIKKKK) the composition is skewed to basic residues.

This sequence belongs to the bacterial ribosomal protein bL31 family. Type B subfamily. As to quaternary structure, part of the 50S ribosomal subunit.

The chain is Large ribosomal subunit protein bL31B from Chlamydia abortus (strain DSM 27085 / S26/3) (Chlamydophila abortus).